Consider the following 230-residue polypeptide: MLFIRMLRRAGQSPACGCWTPVLPVRFLGISPRQIPADANFHSASFSDTDHPRVLITGALGQLGVGLANLLRKRFGKDSVILSDIRKPPDHVFHSGPFIYSDILDYKNLREIVVNNRITWLFHYSALLSAFGEANVSLARAVNITGLHNILDVAAEHNLQLFVPSTIGAFGPTSPRNPTPDLCIQRPRTIYGVSKVHAELMGETMQSRFSMMPQSMANSSATWKPARDCP.

Belongs to the NAD(P)-dependent epimerase/dehydratase family. Expressed in all tissues examined. Detected in most cell types examined, but not observed in endothelial cells, glioma cell lines and some leukemia cell lines.

It is found in the mitochondrion. This chain is Inactive L-threonine 3-dehydrogenase, mitochondrial, found in Homo sapiens (Human).